A 248-amino-acid polypeptide reads, in one-letter code: Deoxyribose-phosphate aldolase (248 aa).

Residue aspartate 106 is the Proton donor/acceptor of the active site. Residue lysine 168 is the Schiff-base intermediate with acetaldehyde of the active site. Lysine 197 acts as the Proton donor/acceptor in catalysis.

This sequence belongs to the DeoC/FbaB aldolase family. DeoC type 1 subfamily.

It is found in the cytoplasm. It catalyses the reaction 2-deoxy-D-ribose 5-phosphate = D-glyceraldehyde 3-phosphate + acetaldehyde. It participates in carbohydrate degradation; 2-deoxy-D-ribose 1-phosphate degradation; D-glyceraldehyde 3-phosphate and acetaldehyde from 2-deoxy-alpha-D-ribose 1-phosphate: step 2/2. In terms of biological role, catalyzes a reversible aldol reaction between acetaldehyde and D-glyceraldehyde 3-phosphate to generate 2-deoxy-D-ribose 5-phosphate. The sequence is that of Deoxyribose-phosphate aldolase from Sinorhizobium medicae (strain WSM419) (Ensifer medicae).